Here is a 338-residue protein sequence, read N- to C-terminus: Replication factor C small subunit (338 aa).

53-60 (GPPGVGKT) provides a ligand contact to ATP.

This sequence belongs to the activator 1 small subunits family. RfcS subfamily. Heteromultimer composed of small subunits (RfcS) and large subunits (RfcL).

Its function is as follows. Part of the RFC clamp loader complex which loads the PCNA sliding clamp onto DNA. The polypeptide is Replication factor C small subunit (Methanosarcina mazei (strain ATCC BAA-159 / DSM 3647 / Goe1 / Go1 / JCM 11833 / OCM 88) (Methanosarcina frisia)).